The chain runs to 117 residues: Hemerythrin subunit alpha (117 aa).

Fe cation is bound by residues H24, H53, E57, H72, H76, H105, and D110.

This sequence belongs to the hemerythrin family. In terms of assembly, octamer composed of two types of chains: alpha and beta.

Its function is as follows. Hemerythrin is a respiratory protein in blood cells of certain marine worms. The oxygen-binding site in each chain contains two iron atoms. In Lingula anatina (Brachiopod), this protein is Hemerythrin subunit alpha.